The primary structure comprises 775 residues: Phosphoribosylformylglycinamidine synthase subunit PurL (775 aa).

H81 is a catalytic residue. Residues Y84 and K123 each coordinate ATP. E125 contacts Mg(2+). Residues 126–129 (SHNH) and R148 contribute to the substrate site. The Proton acceptor role is filled by H127. D149 contributes to the Mg(2+) binding site. Q272 is a substrate binding site. Residue D300 participates in Mg(2+) binding. 344–346 (ESQ) serves as a coordination point for substrate. The ATP site is built by D525 and G562. Residue N563 participates in Mg(2+) binding. Substrate is bound at residue S565.

Belongs to the FGAMS family. Monomer. Part of the FGAM synthase complex composed of 1 PurL, 1 PurQ and 2 PurS subunits.

Its subcellular location is the cytoplasm. It carries out the reaction N(2)-formyl-N(1)-(5-phospho-beta-D-ribosyl)glycinamide + L-glutamine + ATP + H2O = 2-formamido-N(1)-(5-O-phospho-beta-D-ribosyl)acetamidine + L-glutamate + ADP + phosphate + H(+). It functions in the pathway purine metabolism; IMP biosynthesis via de novo pathway; 5-amino-1-(5-phospho-D-ribosyl)imidazole from N(2)-formyl-N(1)-(5-phospho-D-ribosyl)glycinamide: step 1/2. Functionally, part of the phosphoribosylformylglycinamidine synthase complex involved in the purines biosynthetic pathway. Catalyzes the ATP-dependent conversion of formylglycinamide ribonucleotide (FGAR) and glutamine to yield formylglycinamidine ribonucleotide (FGAM) and glutamate. The FGAM synthase complex is composed of three subunits. PurQ produces an ammonia molecule by converting glutamine to glutamate. PurL transfers the ammonia molecule to FGAR to form FGAM in an ATP-dependent manner. PurS interacts with PurQ and PurL and is thought to assist in the transfer of the ammonia molecule from PurQ to PurL. This Agrobacterium fabrum (strain C58 / ATCC 33970) (Agrobacterium tumefaciens (strain C58)) protein is Phosphoribosylformylglycinamidine synthase subunit PurL.